The primary structure comprises 357 residues: MEYKRFKTRQIKVGNVLIGGDAPISVQSMLFTKTRDIEGSLEQINRLYFAGANIVRLACLDMADARALKEIKAKSPLPLIVDIHFNHNLAVYCAEFIDGVRINPGNIGSKENIKEVVKACKERGIPIRIGVNHGSIEKQFSDKFGYGVDAMLESAMYNIKLLEDLDFFDIKISMKTSDAQKTIEAYERLRPLCDYPFHLGVTEAGTKFHSTVKSSIALGNLLLKGIGDTMRVSMTGELEEEIRVARAILQDSGVQKSGVNIISCPTCGRIQSDLLSAIKIVEEKTKHIKEPLNISVMGCVVNALGEAKGADVAIAFGKNQGLVIRHGEVVAKLKESELVDRFLAEVEDEVKSRVVKE.

Positions 264, 267, 299, and 306 each coordinate [4Fe-4S] cluster.

This sequence belongs to the IspG family. [4Fe-4S] cluster is required as a cofactor.

It catalyses the reaction (2E)-4-hydroxy-3-methylbut-2-enyl diphosphate + oxidized [flavodoxin] + H2O + 2 H(+) = 2-C-methyl-D-erythritol 2,4-cyclic diphosphate + reduced [flavodoxin]. Its pathway is isoprenoid biosynthesis; isopentenyl diphosphate biosynthesis via DXP pathway; isopentenyl diphosphate from 1-deoxy-D-xylulose 5-phosphate: step 5/6. In terms of biological role, converts 2C-methyl-D-erythritol 2,4-cyclodiphosphate (ME-2,4cPP) into 1-hydroxy-2-methyl-2-(E)-butenyl 4-diphosphate. This Campylobacter jejuni subsp. jejuni serotype O:2 (strain ATCC 700819 / NCTC 11168) protein is 4-hydroxy-3-methylbut-2-en-1-yl diphosphate synthase (flavodoxin).